The chain runs to 167 residues: Ribosome maturation factor RimM (167 aa).

The PRC barrel domain maps to 92–166 (DDEFYHADLI…RIVADPPEEQ (75 aa)).

This sequence belongs to the RimM family. Binds ribosomal protein uS19.

Its subcellular location is the cytoplasm. In terms of biological role, an accessory protein needed during the final step in the assembly of 30S ribosomal subunit, possibly for assembly of the head region. Essential for efficient processing of 16S rRNA. May be needed both before and after RbfA during the maturation of 16S rRNA. It has affinity for free ribosomal 30S subunits but not for 70S ribosomes. This Paracoccus denitrificans (strain Pd 1222) protein is Ribosome maturation factor RimM.